A 191-amino-acid polypeptide reads, in one-letter code: Chorion class B protein Ld34 (191 aa).

The signal sequence occupies residues Met1–Ser21.

Belongs to the chorion protein family.

Its function is as follows. This protein is one of many from the eggshell of the gypsy moth. In Lymantria dispar (Gypsy moth), this protein is Chorion class B protein Ld34.